The sequence spans 224 residues: MAIRDWPEDARPREKLLKQGAAALTDAELVAVFLRTGVAGKSAVDLGRDLIERFGGLGALCRADRVAACRAPGVGEAKYALLQAVMEMARRTLAEDMQAGDALSSPAAVRDYLRLILRDKEYEVFCCVFLNAQNRVIAVEELFRGTLTQTSVYPREIVKRALAHNAAAMILAHNHPSGVNEPSQADRSLTRRLAEALALVDIRVLDHFIIAGASALSFAEAGHL.

The 123-residue stretch at 102-224 (ALSSPAAVRD…ALSFAEAGHL (123 aa)) folds into the MPN domain. Histidine 173, histidine 175, and aspartate 186 together coordinate Zn(2+). The short motif at 173–186 (HNHPSGVNEPSQAD) is the JAMM motif element.

It belongs to the UPF0758 family.

The protein is UPF0758 protein Tbd_2588 of Thiobacillus denitrificans (strain ATCC 25259 / T1).